The following is a 1612-amino-acid chain: Roundabout homolog 1 (1612 aa).

Positions 1 to 19 (MIAEPAHFYLFGLICLCSG) are cleaved as a signal peptide. Residues 20–858 (SRLRQEDFPP…QQISDVVRQP (839 aa)) lie on the Extracellular side of the membrane. Ig-like C2-type domains follow at residues 29–125 (PRIV…ASLE), 131–218 (DDFR…AELT), 223–307 (PSFV…ATLT), 312–407 (PHFV…LEVT), and 416–502 (PVIR…AYIE). C50 and C108 are oxidised to a cystine. N121 is a glycosylation site (N-linked (GlcNAc...) asparagine). Intrachain disulfides connect C152–C201, C244–C291, and C333–C389. N424 carries N-linked (GlcNAc...) asparagine glycosylation. An intrachain disulfide couples C437 to C486. Fibronectin type-III domains lie at 524–618 (APSK…TQDV), 637–734 (VVLH…TLEE), and 739–835 (PPRS…LDSH). N751, N781, and N788 each carry an N-linked (GlcNAc...) asparagine glycan. Residues 859–879 (AFIAGIGAACWIILMVFSIWL) traverse the membrane as a helical segment. Over 880 to 1612 (YRHRKKRNGL…NNEELEETES (733 aa)) the chain is Cytoplasmic. S901 is modified (phosphoserine). Phosphothreonine is present on T909. Phosphotyrosine is present on Y999. S1016 carries the phosphoserine modification. Phosphotyrosine is present on Y1034. The disordered stretch occupies residues 1045 to 1068 (SNNMNNGAGDSSEKHWKPPGQQKP). Y1075 carries the phosphotyrosine modification. Disordered stretches follow at residues 1088 to 1298 (RAND…ADME), 1313 to 1358 (EQTP…DGSF), and 1381 to 1612 (RRQM…ETES). The segment covering 1098 to 1107 (PYNQSYDQNT) has biased composition (polar residues). Residues 1108 to 1124 (GGSYNSSDRGSSTSGSQ) show a composition bias toward low complexity. Residues 1147–1157 (LPPPPAHPPPH) are compositionally biased toward pro residues. Position 1201 is a phosphothreonine (T1201). Residues 1216-1230 (YSHQSTATLTPSPQE) are compositionally biased toward polar residues. Residues 1242-1254 (DLGHMPHPPDRRR) show a composition bias toward basic and acidic residues. Positions 1257-1268 (VSPPPPPRPISP) are enriched in pro residues. S1258 is subject to Phosphoserine. The segment covering 1283-1297 (MDTDAPEEEEDEADM) has biased composition (acidic residues). The segment covering 1345–1358 (SSGRSSVSSSDGSF) has biased composition (low complexity). Residues 1399–1412 (PRPTSPVSTDSNMS) are compositionally biased toward polar residues. A compositionally biased stretch (basic residues) spans 1420–1431 (RPAKKQKHQPGH). The span at 1441–1451 (LPPPPVPPPAI) shows a compositional bias: pro residues. Basic and acidic residues-rich tracts occupy residues 1477–1502 (ARTD…RQVT) and 1510–1534 (DPRE…RDLP). Over residues 1553–1562 (FPTSNNPRDP) the composition is skewed to polar residues. The span at 1563–1575 (SSSSSMSSRGSGS) shows a compositional bias: low complexity. Positions 1603–1612 (NNEELEETES) are enriched in acidic residues.

The protein belongs to the immunoglobulin superfamily. ROBO family. In terms of assembly, homodimer. Dimerization is mediated by the extracellular domain and is independent of SLIT liganding. Interacts with SLIT1 Interacts with SLIT2. Interacts with FLRT3. Interacts with MYO9B (via Rho-GAP domain). Ubiquitinated. May be deubiquitinated by USP33. Detected in embryonic thalamus neurons (at protein level). Expressed in embryonal spinal cord. Expressed in embryonal lung, and in adult lung bronchial epithelial cells of large proximal airways.

Its subcellular location is the cell membrane. The protein resides in the cell projection. The protein localises to the axon. It localises to the endoplasmic reticulum-Golgi intermediate compartment membrane. Functionally, receptor for SLIT1 and SLIT2 that mediates cellular responses to molecular guidance cues in cellular migration, including axonal navigation at the ventral midline of the neural tube and projection of axons to different regions during neuronal development. Interaction with the intracellular domain of FLRT3 mediates axon attraction towards cells expressing NTN1. In axon growth cones, the silencing of the attractive effect of NTN1 by SLIT2 may require the formation of a ROBO1-DCC complex. Plays a role in the regulation of cell migration via its interaction with MYO9B; inhibits MYO9B-mediated stimulation of RHOA GTPase activity, and thereby leads to increased levels of active, GTP-bound RHOA. May be required for lung development. In Mus musculus (Mouse), this protein is Roundabout homolog 1 (Robo1).